We begin with the raw amino-acid sequence, 236 residues long: LexA repressor (236 aa).

Positions 26–46 (FDEMKDALDLRSKSGIHRLIT) form a DNA-binding region, H-T-H motif. The segment at 85–109 (PSVIEGNLGKVRPPSPTPAEDDHDR) is disordered. Catalysis depends on for autocatalytic cleavage activity residues S157 and K195.

Belongs to the peptidase S24 family. Homodimer.

It carries out the reaction Hydrolysis of Ala-|-Gly bond in repressor LexA.. Its function is as follows. Represses a number of genes involved in the response to DNA damage (SOS response), including recA and lexA. In the presence of single-stranded DNA, RecA interacts with LexA causing an autocatalytic cleavage which disrupts the DNA-binding part of LexA, leading to derepression of the SOS regulon and eventually DNA repair. In Rhodopseudomonas palustris (strain ATCC BAA-98 / CGA009), this protein is LexA repressor.